A 251-amino-acid polypeptide reads, in one-letter code: Fibroblast growth factor-binding protein 1 (251 aa).

The signal sequence occupies residues 1 to 20; that stretch reads MRLHSLILLSFLLLATQAFS. A disordered region spans residues 25-62; it reads KRAKNAPHSTAEEGVEGSAPSLGKAQNKQRSRTSKSLT. Cystine bridges form between C74-C91, C100-C133, and C109-C145. The interval 160–189 is disordered; that stretch reads NARGNTKPRKEKAEVSAREHNKVQEAVSTE. Residues 170-182 are compositionally biased toward basic and acidic residues; sequence EKAEVSAREHNKV. S175 is a glycosylation site (O-linked (GalNAc...) serine). The segment at 210-251 is sufficient for interaction with FGF2 and FGF2-induced effects; sequence RDPECLEDPDVLNQRKTALEFCGESWSSICTFFLNMLQATSC. Disulfide bonds link C214–C251 and C231–C239.

Belongs to the fibroblast growth factor-binding protein family. In terms of assembly, found in a complex with FGFBP1, FGF1 and FGF2. Interacts with FGF1, FGF7, FGF10, FGF22 and HSPG2. Interacts with FGF2. In terms of tissue distribution, expressed in intestine, ovary, lung, placenta and normal and wounded skin.

It is found in the secreted. The protein localises to the extracellular space. Its subcellular location is the cell membrane. Acts as a carrier protein that releases fibroblast-binding factors (FGFs) from the extracellular matrix (EM) storage and thus enhances the mitogenic activity of FGFs. Enhances FGF2 signaling during tissue repair, angiogenesis and in tumor growth. The protein is Fibroblast growth factor-binding protein 1 (Fgfbp1) of Mus musculus (Mouse).